A 435-amino-acid polypeptide reads, in one-letter code: Serine--tRNA ligase (435 aa).

242-244 (TAE) serves as a coordination point for L-serine. Residue 273–275 (RSE) coordinates ATP. E296 contributes to the L-serine binding site. 360-363 (EISS) serves as a coordination point for ATP. L-serine is bound at residue S396.

The protein belongs to the class-II aminoacyl-tRNA synthetase family. Type-1 seryl-tRNA synthetase subfamily. In terms of assembly, homodimer. The tRNA molecule binds across the dimer.

It is found in the cytoplasm. The enzyme catalyses tRNA(Ser) + L-serine + ATP = L-seryl-tRNA(Ser) + AMP + diphosphate + H(+). The catalysed reaction is tRNA(Sec) + L-serine + ATP = L-seryl-tRNA(Sec) + AMP + diphosphate + H(+). It participates in aminoacyl-tRNA biosynthesis; selenocysteinyl-tRNA(Sec) biosynthesis; L-seryl-tRNA(Sec) from L-serine and tRNA(Sec): step 1/1. Catalyzes the attachment of serine to tRNA(Ser). Is also able to aminoacylate tRNA(Sec) with serine, to form the misacylated tRNA L-seryl-tRNA(Sec), which will be further converted into selenocysteinyl-tRNA(Sec). This chain is Serine--tRNA ligase, found in Vibrio atlanticus (strain LGP32) (Vibrio splendidus (strain Mel32)).